We begin with the raw amino-acid sequence, 309 residues long: Homoserine O-succinyltransferase (309 aa).

Cys142 acts as the Acyl-thioester intermediate in catalysis. Residues Lys163 and Ser192 each contribute to the substrate site. His235 acts as the Proton acceptor in catalysis. The active site involves Glu237. Arg249 contacts substrate.

Belongs to the MetA family. As to quaternary structure, homodimer.

It is found in the cytoplasm. It carries out the reaction L-homoserine + succinyl-CoA = O-succinyl-L-homoserine + CoA. The protein operates within amino-acid biosynthesis; L-methionine biosynthesis via de novo pathway; O-succinyl-L-homoserine from L-homoserine: step 1/1. In terms of biological role, transfers a succinyl group from succinyl-CoA to L-homoserine, forming succinyl-L-homoserine. In Escherichia coli O127:H6 (strain E2348/69 / EPEC), this protein is Homoserine O-succinyltransferase.